The chain runs to 248 residues: AA9 family lytic polysaccharide monooxygenase G (248 aa).

Positions 1 to 21 (MLPNAAGLLVAGVVSLSGVAA) are cleaved as a signal peptide. Histidine 22 is a binding site for Cu(2+). Residue asparagine 58 is glycosylated (N-linked (GlcNAc...) asparagine). The cysteines at positions 77 and 195 are disulfide-linked. Histidine 107 is a binding site for Cu(2+). Residue glutamine 190 participates in O2 binding. Position 192 (tyrosine 192) interacts with Cu(2+). N-linked (GlcNAc...) asparagine glycosylation occurs at asparagine 203.

The protein belongs to the polysaccharide monooxygenase AA9 family. Cu(2+) is required as a cofactor.

It is found in the secreted. It catalyses the reaction [(1-&gt;4)-beta-D-glucosyl]n+m + reduced acceptor + O2 = 4-dehydro-beta-D-glucosyl-[(1-&gt;4)-beta-D-glucosyl]n-1 + [(1-&gt;4)-beta-D-glucosyl]m + acceptor + H2O.. In terms of biological role, lytic polysaccharide monooxygenase (LPMO) that depolymerizes crystalline and amorphous polysaccharides via the oxidation of scissile alpha- or beta-(1-4)-glycosidic bonds, yielding C1 or C4 oxidation products. Catalysis by LPMOs requires the reduction of the active-site copper from Cu(II) to Cu(I) by a reducing agent and H(2)O(2) or O(2) as a cosubstrate. The protein is AA9 family lytic polysaccharide monooxygenase G of Malbranchea cinnamomea (Thermophilic fungus).